The following is a 184-amino-acid chain: NADH-quinone oxidoreductase subunit B (184 aa).

[4Fe-4S] cluster contacts are provided by cysteine 63, cysteine 64, cysteine 128, and cysteine 158.

The protein belongs to the complex I 20 kDa subunit family. NDH-1 is composed of 14 different subunits. Subunits NuoB, C, D, E, F, and G constitute the peripheral sector of the complex. It depends on [4Fe-4S] cluster as a cofactor.

It is found in the cell inner membrane. It carries out the reaction a quinone + NADH + 5 H(+)(in) = a quinol + NAD(+) + 4 H(+)(out). In terms of biological role, NDH-1 shuttles electrons from NADH, via FMN and iron-sulfur (Fe-S) centers, to quinones in the respiratory chain. Couples the redox reaction to proton translocation (for every two electrons transferred, four hydrogen ions are translocated across the cytoplasmic membrane), and thus conserves the redox energy in a proton gradient. The chain is NADH-quinone oxidoreductase subunit B from Stenotrophomonas maltophilia (strain R551-3).